The sequence spans 243 residues: DNA repair protein RecO (243 aa).

Belongs to the RecO family.

Its function is as follows. Involved in DNA repair and RecF pathway recombination. In Caulobacter vibrioides (strain NA1000 / CB15N) (Caulobacter crescentus), this protein is DNA repair protein RecO.